Consider the following 376-residue polypeptide: MEGGRNCVMTVQQWQPEYNDMNQIRAIFSLLYLLVWVGAIVGNTLVLYVLTFNQVSLSVRTVFVGCLAGSDLLMCLFSLPITAISIFSRVWVFPAIFCKLIGVFQGGTIFVSSFTLTVIALDRCVLILRPNQEIVNFPRAVFIVFCIWLLGYSLALPVGIYSDIAVYDEICGTFCEENWPDFNPDTGRSGIRRAYGLSVLVLQFGIPALISSICYWMISRVMSDQLARRRGHNIRPESETKLVNRKTRANRMMIVMVVGFVLAWMPFNAVNLYRDLFGISKWYSTVFALCHVCAMCSAVLNPIIYSWFNPQFRQSITTLFKGTDEARLIKKKPQSTSKMVSYPTNFSEIRKETEIASTKTKITIAENDYRAGDQLL.

The Extracellular portion of the chain corresponds to 1 to 29; the sequence is MEGGRNCVMTVQQWQPEYNDMNQIRAIFS. A helical membrane pass occupies residues 30–50; the sequence is LLYLLVWVGAIVGNTLVLYVL. Over 51-66 the chain is Cytoplasmic; sequence TFNQVSLSVRTVFVGC. A helical membrane pass occupies residues 67–87; it reads LAGSDLLMCLFSLPITAISIF. Over 88–89 the chain is Extracellular; it reads SR. A helical membrane pass occupies residues 90 to 110; the sequence is VWVFPAIFCKLIGVFQGGTIF. A disulfide bond links Cys98 and Cys175. The Cytoplasmic portion of the chain corresponds to 111-139; the sequence is VSSFTLTVIALDRCVLILRPNQEIVNFPR. The chain crosses the membrane as a helical span at residues 140 to 160; the sequence is AVFIVFCIWLLGYSLALPVGI. Residues 161-197 are Extracellular-facing; that stretch reads YSDIAVYDEICGTFCEENWPDFNPDTGRSGIRRAYGL. A helical membrane pass occupies residues 198–218; the sequence is SVLVLQFGIPALISSICYWMI. Topologically, residues 219 to 251 are cytoplasmic; sequence SRVMSDQLARRRGHNIRPESETKLVNRKTRANR. A helical transmembrane segment spans residues 252–272; sequence MMIVMVVGFVLAWMPFNAVNL. Residues 273–284 lie on the Extracellular side of the membrane; sequence YRDLFGISKWYS. A helical transmembrane segment spans residues 285–305; the sequence is TVFALCHVCAMCSAVLNPIIY. Topologically, residues 306-376 are cytoplasmic; sequence SWFNPQFRQS…NDYRAGDQLL (71 aa).

This sequence belongs to the G-protein coupled receptor 1 family.

The protein localises to the cell membrane. G-protein coupled receptor for flp-15 neuropeptides. Receptor activation assays suggest binding to predicted flp-15 peptides, GGPQGPLRF-NH2 and RGPSGPLRF-NH2. Likely involved in Gi/Go-coupled signaling pathways. This chain is Neuropeptide receptor 3, found in Caenorhabditis elegans.